The sequence spans 584 residues: FAD-linked oxidoreductase OXR2 (584 aa).

Positions 1-22 (MRSIISAFILSLNFCTQPLVRG) are cleaved as a signal peptide. N75, N97, N115, N225, N302, N321, and N507 each carry an N-linked (GlcNAc...) asparagine glycan. The 183-residue stretch at 128-310 (LGMLSEKYIA…LNATFKVEPV (183 aa)) folds into the FAD-binding PCMH-type domain.

Belongs to the oxygen-dependent FAD-linked oxidoreductase family. Requires FAD as cofactor.

It functions in the pathway secondary metabolite biosynthesis. Functionally, FAD-linked oxidoreductase; part of the gene cluster that mediates the biosynthesis of a tyrosine-derived cytochalasan acting as a fungal signal recognized by resistant rice plants and leads to avirulence in Pi33 resistant rice cultivars. The first step in the pathway is catalyzed by the hybrid PKS-NRPS ACE1, assisted by the enoyl reductase RAP1, that are responsible for fusion of the tyrosine precursor and the polyketide backbone. The polyketide synthase module (PKS) of ACE1 is responsible for the synthesis of the polyketide backbone and the downstream nonribosomal peptide synthetase (NRPS) amidates the carboxyl end of the polyketide with the tyrosine precursor. Because ACE1 lacks a designated enoylreductase (ER) domain, the required activity is provided the enoyl reductase RAP1. Reduction by the hydrolyase ORFZ, followed by dehydration and intra-molecular Diels-Alder cyclization by the Diels-Alderase ORF3 then yield the required isoindolone-fused macrocycle. A number of oxidative steps catalyzed by the tailoring enzymes identified within the cluster, including cytochrome P450 monooxygenases CYP1 to CYP4, the FAD-linked oxidoreductase OXR2 and the short-chain dehydrogenase/reductase OXR1, are further required to afford the final cytochalasans that confer avirulence and which have still to be identified. The monooxygenase CYP1 has been shown to be a site-selective C-18 hydroxylase whereas the function of CYP3 is the site-selective epoxidation of the C-6/C-7 olefin that is present in some intermediate compounds. Finally, SYN2 and RAP2 are not required for avirulence in Pi33 resistant rice cultivars. In Pyricularia oryzae (strain 70-15 / ATCC MYA-4617 / FGSC 8958) (Rice blast fungus), this protein is FAD-linked oxidoreductase OXR2.